The chain runs to 367 residues: Ribosomal lysine N-methyltransferase 5 (367 aa).

Residues tryptophan 110, 170 to 172 (GAG), aspartate 192, tryptophan 256, and methionine 288 each bind S-adenosyl-L-methionine.

This sequence belongs to the class I-like SAM-binding methyltransferase superfamily. RKM5 family.

In terms of biological role, S-adenosyl-L-methionine-dependent protein-lysine N-methyltransferase that monomethylates 60S ribosomal protein L1 (RPL1A and RPL1B) at 'Lys-46'. In Saccharomyces cerevisiae (strain JAY291) (Baker's yeast), this protein is Ribosomal lysine N-methyltransferase 5 (RKM5).